We begin with the raw amino-acid sequence, 476 residues long: Bifunctional protein HldE (476 aa).

The ribokinase stretch occupies residues 1–318; the sequence is MKVTLPDFRR…ENAIRGRAET (318 aa). 195 to 198 provides a ligand contact to ATP; it reads NLSE. Aspartate 264 is an active-site residue. The tract at residues 344-476 is cytidylyltransferase; that stretch reads MTNGIFDILH…IIQSIKNGRG (133 aa).

In the N-terminal section; belongs to the carbohydrate kinase PfkB family. This sequence in the C-terminal section; belongs to the cytidylyltransferase family. In terms of assembly, homodimer.

The catalysed reaction is D-glycero-beta-D-manno-heptose 7-phosphate + ATP = D-glycero-beta-D-manno-heptose 1,7-bisphosphate + ADP + H(+). It catalyses the reaction D-glycero-beta-D-manno-heptose 1-phosphate + ATP + H(+) = ADP-D-glycero-beta-D-manno-heptose + diphosphate. It functions in the pathway nucleotide-sugar biosynthesis; ADP-L-glycero-beta-D-manno-heptose biosynthesis; ADP-L-glycero-beta-D-manno-heptose from D-glycero-beta-D-manno-heptose 7-phosphate: step 1/4. The protein operates within nucleotide-sugar biosynthesis; ADP-L-glycero-beta-D-manno-heptose biosynthesis; ADP-L-glycero-beta-D-manno-heptose from D-glycero-beta-D-manno-heptose 7-phosphate: step 3/4. In terms of biological role, catalyzes the phosphorylation of D-glycero-D-manno-heptose 7-phosphate at the C-1 position to selectively form D-glycero-beta-D-manno-heptose-1,7-bisphosphate. Catalyzes the ADP transfer from ATP to D-glycero-beta-D-manno-heptose 1-phosphate, yielding ADP-D-glycero-beta-D-manno-heptose. The sequence is that of Bifunctional protein HldE from Yersinia pestis bv. Antiqua (strain Antiqua).